Consider the following 356-residue polypeptide: tRNA-specific 2-thiouridylase MnmA (356 aa).

Residues 6–13 (AMSGGVDS) and Leu32 contribute to the ATP site. Cys101 serves as the catalytic Nucleophile. Cysteines 101 and 193 form a disulfide. Position 125 (Gly125) interacts with ATP. An interaction with tRNA region spans residues 143-145 (KDQ). Cys193 acts as the Cysteine persulfide intermediate in catalysis.

Belongs to the MnmA/TRMU family.

Its subcellular location is the cytoplasm. It catalyses the reaction S-sulfanyl-L-cysteinyl-[protein] + uridine(34) in tRNA + AH2 + ATP = 2-thiouridine(34) in tRNA + L-cysteinyl-[protein] + A + AMP + diphosphate + H(+). Functionally, catalyzes the 2-thiolation of uridine at the wobble position (U34) of tRNA, leading to the formation of s(2)U34. The protein is tRNA-specific 2-thiouridylase MnmA of Mycobacteroides abscessus (strain ATCC 19977 / DSM 44196 / CCUG 20993 / CIP 104536 / JCM 13569 / NCTC 13031 / TMC 1543 / L948) (Mycobacterium abscessus).